Here is a 546-residue protein sequence, read N- to C-terminus: MSDFILISDGEDEATPPPSKRARKNRTPTDLNLDTEPSLQKQPPGSASTPFFLDETPLSDDVTVLKSSFGSGTGASSGRENNFFGKRVISLESDSEDSPGPESSKKYEPVYTDSWKKPCRLEFGSSDANSDDDPSWMRRASFQSSLSKDAIEVDSDHEKEDTGVEKMGRKKQTITSKSTSLSADSLPKKKMSKDEKTRAAEEKKLQKEQEKLQKAASKAEDAEHKKLEREKQKWAKEKDKALKCIVAWIDNKVLEGSFGGLLISGLKEKCITYHVTTNPIQRSIVWTMTLPEDIAQSLPLGSKIPYVLLLYEAEDFCNLVAKKELLENVYRVRDEYPSYTMCYLTNKLLSYVNKKERVEYKDPVNGCGWRKPPIDEAIAKLSTHYIGVHSRHCVDEAEVADHVVRLTSSLAHCQVRKKLTRLSVYADGTLMSKNAADKHLIRESIWLKVLVAIPKVQPRYAIAVSKKYPSLKSLLKVYMDPNISVHEKEFLLKDLKVENLVGRDTSVGEACSKRIYRVLMSLDGTIKTDDVENGAASFTLPPSDLI.

Disordered stretches follow at residues Met-1 to Glu-55 and Val-88 to Gln-232. Residues Pro-28–Thr-49 show a composition bias toward polar residues. Basic and acidic residues-rich tracts occupy residues Ser-103–Arg-120 and Asp-149–Met-167. Residues Thr-173–Ala-183 show a composition bias toward polar residues. A coiled-coil region spans residues Lys-188 to Ile-245. The segment covering Ser-192–Gln-232 has biased composition (basic and acidic residues). Residues Asn-278 to Tyr-478 enclose the ERCC4 domain.

Belongs to the EME1/MMS4 family. In terms of assembly, forms a heterodimer with MUS81. Requires Mg(2+) as cofactor. Ca(2+) is required as a cofactor.

It localises to the nucleus. Interacts with MUS81 to form a DNA structure-specific endonuclease with substrate preference for branched DNA structures with a 5'-end at the branch nick. Typical substrates include 3'-flap structures, D-loops, replication forks, nicked Holliday junctions and also intact Holliday junctions with a reduced efficiency. May be required in mitosis for the processing of stalled or collapsed replication fork intermediates. Plays a role in DNA repair and in genotoxic stress-induced homologous recombination (HR) in somatic cells. Mediates a subset of meiotic recombination events that are insensitive to crossover interference. The chain is Crossover junction endonuclease EME1A (EME1A) from Arabidopsis thaliana (Mouse-ear cress).